A 64-amino-acid chain; its full sequence is Large ribosomal subunit protein uL29 (64 aa).

This sequence belongs to the universal ribosomal protein uL29 family.

This is Large ribosomal subunit protein uL29 from Nitratiruptor sp. (strain SB155-2).